A 143-amino-acid polypeptide reads, in one-letter code: 6,7-dimethyl-8-ribityllumazine synthase (143 aa).

5-amino-6-(D-ribitylamino)uracil is bound by residues phenylalanine 13, 45–47 (TFD), and 69–71 (CVI). Position 74-75 (74-75 (ET)) interacts with (2S)-2-hydroxy-3-oxobutyl phosphate. The active-site Proton donor is histidine 77. Leucine 102 contributes to the 5-amino-6-(D-ribitylamino)uracil binding site. Arginine 117 lines the (2S)-2-hydroxy-3-oxobutyl phosphate pocket.

It belongs to the DMRL synthase family.

The enzyme catalyses (2S)-2-hydroxy-3-oxobutyl phosphate + 5-amino-6-(D-ribitylamino)uracil = 6,7-dimethyl-8-(1-D-ribityl)lumazine + phosphate + 2 H2O + H(+). Its pathway is cofactor biosynthesis; riboflavin biosynthesis; riboflavin from 2-hydroxy-3-oxobutyl phosphate and 5-amino-6-(D-ribitylamino)uracil: step 1/2. Catalyzes the formation of 6,7-dimethyl-8-ribityllumazine by condensation of 5-amino-6-(D-ribitylamino)uracil with 3,4-dihydroxy-2-butanone 4-phosphate. This is the penultimate step in the biosynthesis of riboflavin. In Archaeoglobus fulgidus (strain ATCC 49558 / DSM 4304 / JCM 9628 / NBRC 100126 / VC-16), this protein is 6,7-dimethyl-8-ribityllumazine synthase.